A 513-amino-acid chain; its full sequence is Histone acetyltransferase KAT5 (513 aa).

The Tudor-knot domain occupies 8–65 (IEGCRLPVLRRNQDNEDEWPLAEILSVKDISGRKLFYVHYIDFNKRLDEWVTHERLDL). At K52 the chain carries N6-acetyllysine. The interval 69–106 (QFPKKEAKTPTKNGLPGSRPGSPEREVPASAQASGKTL) is disordered. Position 86 is a phosphoserine; by GSK3 (S86). S90 is modified (phosphoserine; by CDK1 and CDK9). N6-acetyllysine; by autocatalysis is present on residues K104 and K120. The disordered stretch occupies residues 122 to 220 (REAIPGGEPD…RMTGSLVSDR (99 aa)). The span at 133 to 144 (PLSSSSCLQPNH) shows a compositional bias: polar residues. N6-acetyllysine; by autocatalysis is present on residues K148, K150, K187, and K189. S199 is subject to Phosphoserine. One can recognise an MYST-type HAT domain in the interval 227–504 (TRMKNIECIE…IDSKCLHFTP (278 aa)). A C2HC MYST-type zinc finger spans residues 260–285 (LYLCEFCLKYGRSLKCLQRHLTKCDL). Residue K327 is modified to N6-acetyllysine; by autocatalysis. Positions 368–513 (ACILTLPPYQ…PKDWSKRGKW (146 aa)) are interaction with ATF2. Acetyl-CoA-binding positions include 370–372 (ILT) and 377–383 (QRRGYGK). The active-site Proton donor/acceptor is the E403. Residues S407 and S416 each coordinate acetyl-CoA. Residue K430 forms a Glycyl lysine isopeptide (Lys-Gly) (interchain with G-Cter in SUMO1); alternate linkage. Residue K430 forms a Glycyl lysine isopeptide (Lys-Gly) (interchain with G-Cter in SUMO2); alternate linkage. K451 participates in a covalent cross-link: Glycyl lysine isopeptide (Lys-Gly) (interchain with G-Cter in SUMO1).

This sequence belongs to the MYST (SAS/MOZ) family. As to quaternary structure, component of the NuA4 histone acetyltransferase complex which contains the catalytic subunit KAT5/TIP60 and the subunits EP400, TRRAP/PAF400, BRD8/SMAP, EPC1, DMAP1/DNMAP1, RUVBL1/TIP49, RUVBL2, ING3, actin, ACTL6A/BAF53A, MORF4L1/MRG15, MORF4L2/MRGX, MRGBP, YEATS4/GAS41, VPS72/YL1 and MEAF6. KAT5/TIP60, EPC1, and ING3 together constitute a minimal HAT complex termed Piccolo NuA4. The NuA4 complex interacts with MYC. Interacts with ATM. Interacts with JADE1. Interacts with PLA2G4A/CPLA2, EDNRA and HDAC7. Interacts with the cytoplasmic tail of APP and APBB1/FE65. Interacts with TRIM24 and TRIM68. Forms a complex with SENP6 and UBE2I in response to UV irradiation. Identified in a complex with HINT1. Interacts with ATF2 and CUL3. Interacts with NR1D2 (via N-terminus). Component of a SWR1-like complex. Interacts with FOXP3. Interacts with ZBTB49. Interacts with SRF. Interacts with ATF3; promoting autoacetylation and deubiquitination by USP7. Interacts with EP300/p300; interaction promotes KAT5 autoacetylation. Interacts with PRKDC; interaction is impaired following KAT5 sumoylation. Interacts with GPR50. Interacts with NME3; this interaction enables recruitment of NME3 at DNA damage sites where it plays a role in the repair of DNA. (Microbial infection) Interacts with HIV-1 TAT. Phosphorylated on Ser-86 and Ser-90; enhanced during G2/M phase. The phosphorylated form has a higher activity. Phosphorylation at Ser-90 by CDK1 or CDK9 is a prerequisite for phosphorylation at Ser-86 by GSK3. Phosphorylation at Ser-86 by GSK3 (GSK3A or GSK3B) activates acetyltransferase and acyltransferase activities. Phosphorylation at Ser-90 by CDK9 promotes KAT5 recruitment to chromatin. Phosphorylation by VRK1 following DNA damage promotes KAT5 association with chromatin and histone acetyltransferase activity. Post-translationally, autoacetylated. Autoacetylation is required for histone acetyltransferase activity. Autoacetylation at Lys-327 is facilitated by interaction with EP300/p300: it prevents ubiquitination and subsequent degradation by the proteasome and promotes acetylation of target proteins. Deacetylated by HDAC3 and SIRT1. Deacetylation by HDAC3 promotes its ubiquitination and cytoplasmic localization. In terms of processing, sumoylated by UBE2I at Lys-430 and Lys-451, leading to increase of its histone acetyltransferase activity in UV-induced DNA damage response, as well as its translocation to nuclear bodies. Sumoylation with SUMO2 by PIAS4 at Lys-430 promotes repair of DNA double-strand breaks (DSBs) via homologous recombination (HR). Sumoylation by PIAS4 impairs interaction with PRKDC, inhibiting non-homologous end joining (NHEJ)-mediated repair of DSBs, thereby facilitating HR. Desumoylated by SENP3. Ubiquitinated by MDM2, leading to its proteasome-dependent degradation. Ubiquitination is prevented by autoacetylation at Lys-327. Ubiquitinated following deacetylation by HDAC3, leading to cytoplasmic localization. Deubiquitinated by USP7 following interaction with ATF3, promoting its stabilization. Post-translationally, (Microbial infection) In case of HIV-1 infection, interaction with the viral Tat protein leads to KAT5 polyubiquitination and targets it to degradation.

It is found in the nucleus. The protein resides in the chromosome. It localises to the cytoplasm. Its subcellular location is the centromere. The protein localises to the kinetochore. It is found in the cytoskeleton. The protein resides in the spindle pole. It localises to the nucleolus. Its subcellular location is the perinuclear region. It catalyses the reaction L-lysyl-[histone] + acetyl-CoA = N(6)-acetyl-L-lysyl-[histone] + CoA + H(+). The catalysed reaction is L-lysyl-[protein] + acetyl-CoA = N(6)-acetyl-L-lysyl-[protein] + CoA + H(+). The enzyme catalyses (2E)-butenoyl-CoA + L-lysyl-[protein] = N(6)-(2E)-butenoyl-L-lysyl-[protein] + CoA + H(+). It carries out the reaction 2-hydroxyisobutanoyl-CoA + L-lysyl-[protein] = N(6)-(2-hydroxyisobutanoyl)-L-lysyl-[protein] + CoA + H(+). It catalyses the reaction (S)-lactoyl-CoA + L-lysyl-[protein] = N(6)-[(S)-lactoyl]-L-lysyl-[protein] + CoA + H(+). With respect to regulation, acyltransferase and acetyltransferase activities are activated by phosphorylation and autoacetylation. Autoacetylation activates the histone acetyltransferase activity. In terms of biological role, catalytic subunit of the NuA4 histone acetyltransferase complex, a multiprotein complex involved in transcriptional activation of select genes principally by acetylation of nucleosomal histones H2A and H4. Histone acetylation alters nucleosome-DNA interactions and promotes interaction of the modified histones with other proteins which positively regulate transcription. The NuA4 histone acetyltransferase complex is required for the activation of transcriptional programs associated with proto-oncogene mediated growth induction, tumor suppressor mediated growth arrest and replicative senescence, apoptosis, and DNA repair. The NuA4 complex plays a direct role in repair of DNA double-strand breaks (DSBs) by promoting homologous recombination (HR): the complex inhibits TP53BP1 binding to chromatin via MBTD1, which recognizes and binds histone H4 trimethylated at 'Lys-20' (H4K20me), and KAT5 that catalyzes acetylation of 'Lys-15' of histone H2A (H2AK15ac), thereby blocking the ubiquitination mark required for TP53BP1 localization at DNA breaks. Also involved in DSB repair by mediating acetylation of 'Lys-5' of histone H2AX (H2AXK5ac), promoting NBN/NBS1 assembly at the sites of DNA damage. The NuA4 complex plays a key role in hematopoietic stem cell maintenance and is required to maintain acetylated H2A.Z/H2AZ1 at MYC target genes. The NuA4 complex is also required for spermatid development by promoting acetylation of histones: histone hyperacetylation is required for histone replacement during the transition from round to elongating spermatids. Component of a SWR1-like complex that specifically mediates the removal of histone H2A.Z/H2AZ1 from the nucleosome. Also acetylates non-histone proteins, such as BMAL1, ATM, AURKB, CHKA, CGAS, ERCC4/XPF, LPIN1, TP53/p53, NDC80/HEC1, NR1D2, RAN, SOX4, FOXP3, SQSTM1, ULK1 and RUBCNL/Pacer. Directly acetylates and activates ATM. Promotes nucleotide excision repair (NER) by mediating acetylation of ERCC4/XPF, thereby promoting formation of the ERCC4-ERCC1 complex. Relieves NR1D2-mediated inhibition of APOC3 expression by acetylating NR1D2. Acts as a regulator of regulatory T-cells (Treg) by catalyzing FOXP3 acetylation, thereby promoting FOXP3 transcriptional repressor activity. Involved in skeletal myoblast differentiation by mediating acetylation of SOX4. Catalyzes acetylation of APBB1/FE65, increasing its transcription activator activity. Promotes transcription elongation during the activation phase of the circadian cycle by catalyzing acetylation of BMAL1, promoting elongation of circadian transcripts. Together with GSK3 (GSK3A or GSK3B), acts as a regulator of autophagy: phosphorylated at Ser-86 by GSK3 under starvation conditions, leading to activate acetyltransferase activity and promote acetylation of key autophagy regulators, such as ULK1 and RUBCNL/Pacer. Acts as a regulator of the cGAS-STING innate antiviral response by catalyzing acetylation the N-terminus of CGAS, thereby promoting CGAS DNA-binding and activation. Also regulates lipid metabolism by mediating acetylation of CHKA or LPIN1. Promotes lipolysis of lipid droplets following glucose deprivation by mediating acetylation of isoform 1 of CHKA, thereby promoting monomerization of CHKA and its conversion into a tyrosine-protein kinase. Acts as a regulator of fatty-acid-induced triacylglycerol synthesis by catalyzing acetylation of LPIN1, thereby promoting the synthesis of diacylglycerol. In addition to protein acetyltransferase, can use different acyl-CoA substrates, such as (2E)-butenoyl-CoA (crotonyl-CoA), S-lactoyl-CoA (lactyl-CoA) and 2-hydroxyisobutanoyl-CoA (2-hydroxyisobutyryl-CoA), and is able to mediate protein crotonylation, lactylation and 2-hydroxyisobutyrylation, respectively. Acts as a key regulator of chromosome segregation and kinetochore-microtubule attachment during mitosis by mediating acetylation or crotonylation of target proteins. Catalyzes acetylation of AURKB at kinetochores, increasing AURKB activity and promoting accurate chromosome segregation in mitosis. Acetylates RAN during mitosis, promoting microtubule assembly at mitotic chromosomes. Acetylates NDC80/HEC1 during mitosis, promoting robust kinetochore-microtubule attachment. Catalyzes crotonylation of MAPRE1/EB1, thereby ensuring accurate spindle positioning in mitosis. Catalyzes lactylation of NBN/NBS1 in response to DNA damage, thereby promoting DNA double-strand breaks (DSBs) via homologous recombination (HR). Functionally, (Microbial infection) Catalyzes the acetylation of flavivirus NS3 protein to modulate their RNA-binding and -unwinding activities leading to facilitate viral replication. The polypeptide is Histone acetyltransferase KAT5 (Homo sapiens (Human)).